The primary structure comprises 97 residues: Putative defensin-like protein 237 (97 aa).

The signal sequence occupies residues 1-23 (MRHATSPIVFCFLIFLVMNHVKG). 4 disulfides stabilise this stretch: Cys30–Cys94, Cys40–Cys71, Cys48–Cys84, and Cys69–Cys86.

The protein belongs to the DEFL family.

The protein localises to the secreted. This Arabidopsis thaliana (Mouse-ear cress) protein is Putative defensin-like protein 237 (SCRL21).